Reading from the N-terminus, the 180-residue chain is ATP synthase subunit delta, chloroplastic (180 aa).

It belongs to the ATPase delta chain family. As to quaternary structure, F-type ATPases have 2 components, F(1) - the catalytic core - and F(0) - the membrane proton channel. F(1) has five subunits: alpha(3), beta(3), gamma(1), delta(1), epsilon(1). CF(0) has four main subunits: a(1), b(1), b'(1) and c(10-14). The alpha and beta chains form an alternating ring which encloses part of the gamma chain. F(1) is attached to F(0) by a central stalk formed by the gamma and epsilon chains, while a peripheral stalk is formed by the delta, b and b' chains.

Its subcellular location is the plastid. It is found in the chloroplast thylakoid membrane. F(1)F(0) ATP synthase produces ATP from ADP in the presence of a proton or sodium gradient. F-type ATPases consist of two structural domains, F(1) containing the extramembraneous catalytic core and F(0) containing the membrane proton channel, linked together by a central stalk and a peripheral stalk. During catalysis, ATP synthesis in the catalytic domain of F(1) is coupled via a rotary mechanism of the central stalk subunits to proton translocation. Its function is as follows. This protein is part of the stalk that links CF(0) to CF(1). It either transmits conformational changes from CF(0) to CF(1) or is implicated in proton conduction. The protein is ATP synthase subunit delta, chloroplastic of Emiliania huxleyi (Coccolithophore).